A 442-amino-acid polypeptide reads, in one-letter code: Protein PRRC1-B (442 aa).

The interval 1 to 24 is disordered; the sequence is MMEESGIETTPPSTPPPSTIGTSV.

Belongs to the PRRC1 family.

The protein localises to the golgi apparatus. This is Protein PRRC1-B (prrc1-b) from Xenopus laevis (African clawed frog).